Here is a 639-residue protein sequence, read N- to C-terminus: tRNA uridine 5-carboxymethylaminomethyl modification enzyme MnmG (639 aa).

Residue 13–18 (GGGHAG) participates in FAD binding. 274–288 (GPRYCPSIEDKIHRF) contacts NAD(+).

This sequence belongs to the MnmG family. Homodimer. Heterotetramer of two MnmE and two MnmG subunits. Requires FAD as cofactor.

It localises to the cytoplasm. Its function is as follows. NAD-binding protein involved in the addition of a carboxymethylaminomethyl (cmnm) group at the wobble position (U34) of certain tRNAs, forming tRNA-cmnm(5)s(2)U34. In Polynucleobacter asymbioticus (strain DSM 18221 / CIP 109841 / QLW-P1DMWA-1) (Polynucleobacter necessarius subsp. asymbioticus), this protein is tRNA uridine 5-carboxymethylaminomethyl modification enzyme MnmG.